A 477-amino-acid polypeptide reads, in one-letter code: tRNA-2-methylthio-N(6)-dimethylallyladenosine synthase (477 aa).

The MTTase N-terminal domain occupies 3 to 120 (KKLYIKTWGC…LPEMINELKG (118 aa)). The [4Fe-4S] cluster site is built by Cys-12, Cys-49, Cys-83, Cys-157, Cys-161, and Cys-164. Residues 143 to 375 (RAEGPTAFVS…QQRITQQALR (233 aa)) enclose the Radical SAM core domain. Residues 378 to 441 (RHMVGTEQRI…TNSLRGEVVR (64 aa)) form the TRAM domain.

The protein belongs to the methylthiotransferase family. MiaB subfamily. As to quaternary structure, monomer. [4Fe-4S] cluster is required as a cofactor.

Its subcellular location is the cytoplasm. It carries out the reaction N(6)-dimethylallyladenosine(37) in tRNA + (sulfur carrier)-SH + AH2 + 2 S-adenosyl-L-methionine = 2-methylsulfanyl-N(6)-dimethylallyladenosine(37) in tRNA + (sulfur carrier)-H + 5'-deoxyadenosine + L-methionine + A + S-adenosyl-L-homocysteine + 2 H(+). In terms of biological role, catalyzes the methylthiolation of N6-(dimethylallyl)adenosine (i(6)A), leading to the formation of 2-methylthio-N6-(dimethylallyl)adenosine (ms(2)i(6)A) at position 37 in tRNAs that read codons beginning with uridine. The chain is tRNA-2-methylthio-N(6)-dimethylallyladenosine synthase from Alteromonas mediterranea (strain DSM 17117 / CIP 110805 / LMG 28347 / Deep ecotype).